Reading from the N-terminus, the 370-residue chain is Chloromuconate cycloisomerase (370 aa).

K165 serves as the catalytic Proton acceptor. D194, E220, and D245 together coordinate Mn(2+). The active-site Proton donor is the E323.

The protein belongs to the mandelate racemase/muconate lactonizing enzyme family. The cofactor is Mn(2+).

It catalyses the reaction 2-[(2R)-2-chloro-2,5-dihydro-5-oxofuryl]acetate = 3-chloro-cis,cis-muconate + H(+). The protein operates within aromatic compound metabolism; 3-chlorocatechol degradation. In Cupriavidus pinatubonensis (strain JMP 134 / LMG 1197) (Cupriavidus necator (strain JMP 134)), this protein is Chloromuconate cycloisomerase (tfdDI).